Consider the following 418-residue polypeptide: Sprouty-related, EVH1 domain-containing protein 2 (418 aa).

The WH1 domain maps to 5-122 (THPDDDSYIV…RGVRKAIEDL (118 aa)). Residues 127–171 (TTSSSTIHNEAELGDDDVFTTATDSSSNSSQKREQPTRTISSPTS) form a disordered region. Over residues 146-156 (TTATDSSSNSS) the composition is skewed to polar residues. The KBD domain occupies 201-257 (PYRQVSFPDDDEEIVRINPREKIWMTGYEDYRHAPVRGKYPDPSEDADSSYVRFAKG). S206 carries the phosphoserine modification. Y228 and Y231 each carry phosphotyrosine. Residues 275–302 (GLGEDPKGRGGSVIKTQPSRGKSRRRKE) are disordered. The 109-residue stretch at 308–416 (RCVYCRDMFN…CRCCGGKHKA (109 aa)) folds into the SPR domain.

As to quaternary structure, homodimer and heterodimer. Able to interact with SPRED1 to form heterodimers. Interacts with RAS. May interact with ZDHHC13 (via ANK repeats) and ZDHHC17 (via ANK repeats). Interacts with TESK1. Interacts with NF1. Post-translationally, phosphorylated on serine and threonine residues. Phosphorylated on tyrosine. Phosphorylation of Tyr-228 and Tyr-231 are required for ubiquitination. In terms of processing, ubiquitinated; leading to degradation by the proteasome. As to expression, expressed in liver, skin, small intestine, salivary gland and prostate.

The protein localises to the cell membrane. It is found in the cytoplasmic vesicle. The protein resides in the secretory vesicle membrane. Its subcellular location is the cytoplasm. Functionally, negatively regulates Ras signaling pathways and downstream activation of MAP kinases. Recruits and translocates NF1 to the cell membrane, thereby enabling NF1-dependent hydrolysis of active GTP-bound Ras to inactive GDP-bound Ras. Inhibits fibroblast growth factor (FGF)-induced retinal lens fiber differentiation, probably by inhibiting FGF-mediated phosphorylation of ERK1/2. Inhibits TGFB-induced epithelial-to-mesenchymal transition in lens epithelial cells. This chain is Sprouty-related, EVH1 domain-containing protein 2 (SPRED2), found in Homo sapiens (Human).